A 698-amino-acid chain; its full sequence is Ion-translocating oxidoreductase complex subunit C (698 aa).

2 consecutive 4Fe-4S ferredoxin-type domains span residues 366–397 (TEMG…QQLY) and 407–436 (KARN…VQYY). Residues Cys377, Cys380, Cys383, Cys387, Cys416, Cys419, Cys422, and Cys426 each contribute to the [4Fe-4S] cluster site.

It belongs to the 4Fe4S bacterial-type ferredoxin family. RnfC subfamily. As to quaternary structure, the complex is composed of six subunits: RnfA, RnfB, RnfC, RnfD, RnfE and RnfG. [4Fe-4S] cluster serves as cofactor.

The protein localises to the cell inner membrane. In terms of biological role, part of a membrane-bound complex that couples electron transfer with translocation of ions across the membrane. This is Ion-translocating oxidoreductase complex subunit C from Yersinia pseudotuberculosis serotype O:1b (strain IP 31758).